Consider the following 146-residue polypeptide: 3-hydroxyacyl-[acyl-carrier-protein] dehydratase FabZ (146 aa).

Residue H48 is part of the active site.

This sequence belongs to the thioester dehydratase family. FabZ subfamily.

The protein localises to the cytoplasm. It carries out the reaction a (3R)-hydroxyacyl-[ACP] = a (2E)-enoyl-[ACP] + H2O. In terms of biological role, involved in unsaturated fatty acids biosynthesis. Catalyzes the dehydration of short chain beta-hydroxyacyl-ACPs and long chain saturated and unsaturated beta-hydroxyacyl-ACPs. In Paracidovorax citrulli (strain AAC00-1) (Acidovorax citrulli), this protein is 3-hydroxyacyl-[acyl-carrier-protein] dehydratase FabZ.